The following is a 436-amino-acid chain: Chorion-specific transcription factor GCMa (436 aa).

The segment at residues 14-169 is a DNA-binding region (GCM); sequence LSWDINDVKL…KLEAEARRAM (156 aa). Zn(2+) contacts are provided by C76, C82, C86, C113, C116, C125, H152, and H154. Residues 171–202 are disordered; the sequence is KVNTAPSSVSLSLKGSTETRSLPGETQSQGSL. A compositionally biased stretch (polar residues) spans 174–202; sequence TAPSSVSLSLKGSTETRSLPGETQSQGSL.

In terms of processing, polyubiquitinated in the presence of UBE2D2 and FBXW2 (in vitro). As to expression, highly expressed in the placenta. Expressed in trophoblast cells of the villi.

It localises to the nucleus. Its function is as follows. Transcription factor involved in the control of expression of placental growth factor (PGF) and other placenta-specific genes. Binds to the trophoblast-specific element 2 (TSE2) of the aromatase gene enhancer. Binds to the SYDE1 promoter. Has a central role in mediating the differentiation of trophoblast cells along both the villous and extravillous pathways in placental development. The protein is Chorion-specific transcription factor GCMa (GCM1) of Homo sapiens (Human).